The sequence spans 557 residues: Transcription factor fil1 (557 aa).

The disordered stretch occupies residues 234-258 (SPVKRELNDSTSPSKLSESSSSLTG). Over residues 243–258 (STSPSKLSESSSSLTG) the composition is skewed to low complexity. GATA-type zinc fingers lie at residues 365–390 (CFNCGVTETPLWRRTSDKLNFLCNAC) and 419–443 (CANCSSTKTSLWRKDRHGQTVCNAC).

Its subcellular location is the nucleus. It localises to the cytoplasm. Functionally, activates genes required for amino acid biosynthesis and acts as a master transcriptional regulator during amino acid starvation. Binds variations of the DNA sequence 5'-GAT[AC]GC-3'. This chain is Transcription factor fil1, found in Schizosaccharomyces pombe (strain 972 / ATCC 24843) (Fission yeast).